The primary structure comprises 428 residues: MSNALPKGVFDIFPYVTSPKNLWRNSSLWKRVEHAAHRICNLYGFDEIRTPVFEKTETFLRVGEYSDIVKKEVYTFLDKKRRSLTLRPEGTAAVVRALLDHSADMRKDNKFYYILPMFRYERQQSGRYRQHHQFGLEAIGVRHPLRDAEVLSLLWDFYAAVGLQHMQIHVNFLGGQKTRARYDEALREFFRKDLDRLSPLSQERYHANLLRILDSKEPEDQEFIEKAPSILDYIDDRDLSYFDAVLAQLKALGISFAINPRLVRGLDYYTDLVFEAVTVVGEHSYALGGGGRYDELVAQSGGPSMPAFGFGVGLERVIQTLLEQGNSLSTSTRRLRLIPMDEQADAFCFSWANRLRNLGIATEVDWSHKKPKLSLKDAADQQVSFVCLLGEQELATKQFIVKDMSLHQSFSGAQQDVEQRLVYEVQNA.

The protein belongs to the class-II aminoacyl-tRNA synthetase family. Homodimer.

The protein localises to the cytoplasm. The catalysed reaction is tRNA(His) + L-histidine + ATP = L-histidyl-tRNA(His) + AMP + diphosphate + H(+). This chain is Histidine--tRNA ligase, found in Chlamydia trachomatis serovar A (strain ATCC VR-571B / DSM 19440 / HAR-13).